The primary structure comprises 113 residues: Protein Wnt-10 (113 aa).

Ser-1 carries the O-palmitoleoyl serine; by PORCN lipid modification. Cysteines 79 and 94 form a disulfide.

This sequence belongs to the Wnt family. In terms of processing, palmitoleoylation is required for efficient binding to frizzled receptors. Depalmitoleoylation leads to Wnt signaling pathway inhibition.

It localises to the secreted. It is found in the extracellular space. The protein resides in the extracellular matrix. Functionally, ligand for members of the frizzled family of seven transmembrane receptors. Probable developmental protein. May be a signaling molecule which affects the development of discrete regions of tissues. Is likely to signal over only few cell diameters. The polypeptide is Protein Wnt-10 (WNT-10) (Eptatretus stoutii (Pacific hagfish)).